The chain runs to 187 residues: UPF0301 protein BCI_0481 (187 aa).

Belongs to the UPF0301 (AlgH) family.

The polypeptide is UPF0301 protein BCI_0481 (Baumannia cicadellinicola subsp. Homalodisca coagulata).